The sequence spans 454 residues: MAYQMASLKIEMKEVVHVKPSKPTPSIVLPLSALEHRPYPDSIWPIVHVYQSPSNGQLDPAFVLKQALSKALVYYYPLAGKLVKQPNGKVAINCNNDGVPFLEAIANCELSSLNYLDDHDIRIAKQLVFDFHPQQDENEYPHPVSFKLTKFQCGGFTIGMSTSHIVCDGWGACKFFHAIVELASGKSEPFLKPVWERERLIGSITTQPMPNPMDETTAAVSPFLPATDVMYELFKVDKESIRRLKMSLMKEISCNESMEQSFTTFESLAAYVWRSRARALNLNNEGKTLLVFSVQVRQHMSPPLSDGYYGTAITEGQVVLTMKELNEKPLSDIVKLVKESKNVAFTGDFIKKTIDTLESNPENFNVEEGPGATLALSDWKHLGFMPNVDFGWKEPINMVPAPCNMFEYEGLCIFLSPSNHDPSMEGGVRVFISLPSVAMPKFKEEMEALKVITP.

It belongs to the plant acyltransferase family. In terms of assembly, monomer.

The polypeptide is Inactive tetrahydroanabasine acetyltransferase pauper allele (Lupinus albus (White lupine)).